The chain runs to 282 residues: Non-selective voltage-gated ion channel VDAC2 (282 aa).

Residue Ala-1 is modified to N-acetylalanine. A run of 19 beta stranded transmembrane segments spans residues 25–34, 38–46, 53–63, 68–75, 79–88, 94–103, 110–119, 122–129, 136–144, 149–157, 162–174, 177–184, 188–197, 201–210, 217–226, 230–237, 241–250, 253–262, and 272–281; these read LVKLDVKTKS, VEFTTSGTS, VNGSLETKYKW, LTFTEKWN, TLGTEIAIED, LKLTFDTTFS, SGKVKAAYKQ, VNLGCDVD, AIHGSAVVG, LAGYQMTFD, KLTK…GYKT, FQLHTNVN, EFAGSIYQKV, METAVNLAWT, RFGIAAKYQL, AAISAKVN, LVGVGYTQTL, GVKLTLSALV, and HKLGLGLELE. NAD(+)-binding positions include 241 to 243 and 259 to 263; these read LVG and SALVD.

This sequence belongs to the eukaryotic mitochondrial porin family. As to quaternary structure, monomer, homodimer and higher order oligomers; formation of higher order structures is necessary for scramblase activity. In terms of tissue distribution, expressed in skeletal muscle and oocytes.

The protein resides in the mitochondrion outer membrane. Its subcellular location is the membrane. The enzyme catalyses chloride(in) = chloride(out). It carries out the reaction K(+)(in) = K(+)(out). The catalysed reaction is a 1,2-diacyl-sn-glycero-3-phospho-L-serine(in) = a 1,2-diacyl-sn-glycero-3-phospho-L-serine(out). It catalyses the reaction a 1,2-diacyl-sn-glycero-3-phosphocholine(in) = a 1,2-diacyl-sn-glycero-3-phosphocholine(out). The enzyme catalyses a 1,2-diacyl-sn-glycero-3-phospho-(1D-myo-inositol)(in) = a 1,2-diacyl-sn-glycero-3-phospho-(1D-myo-inositol)(out). Functionally, non-selective voltage-gated ion channel that mediates the transport of anions and cations through the mitochondrion outer membrane and plasma membrane. The channel adopts an open conformation at zero mV and a closed conformation at both positive and negative potentials. There are two populations of channels; the main that functions in a lower open-state conductance with lower ion selectivity, that switch, in a voltage-dependent manner, from the open to a low-conducting 'closed' state and the other that has a normal ion selectivity in the typical high conductance, 'open' state. Catalyzes the scrambling of phospholipids across the outer mitochondrial membrane; the mechanism is unrelated to channel activity and is capable of translocating both anionic and zwitterionic phospholipids. The chain is Non-selective voltage-gated ion channel VDAC2 from Xenopus laevis (African clawed frog).